A 236-amino-acid chain; its full sequence is 2-C-methyl-D-erythritol 4-phosphate cytidylyltransferase (236 aa).

It belongs to the IspD/TarI cytidylyltransferase family. IspD subfamily.

The catalysed reaction is 2-C-methyl-D-erythritol 4-phosphate + CTP + H(+) = 4-CDP-2-C-methyl-D-erythritol + diphosphate. It functions in the pathway isoprenoid biosynthesis; isopentenyl diphosphate biosynthesis via DXP pathway; isopentenyl diphosphate from 1-deoxy-D-xylulose 5-phosphate: step 2/6. Functionally, catalyzes the formation of 4-diphosphocytidyl-2-C-methyl-D-erythritol from CTP and 2-C-methyl-D-erythritol 4-phosphate (MEP). The chain is 2-C-methyl-D-erythritol 4-phosphate cytidylyltransferase from Burkholderia orbicola (strain AU 1054).